A 363-amino-acid chain; its full sequence is 3-methyl-D-ornithine--L-lysine ligase (363 aa).

K10 is a binding site for ATP. Residue 11–12 participates in L-lysine binding; that stretch reads LQ. Residues D31, 49 to 50, and 72 to 73 contribute to the ATP site; these read DV and EN. E72 is a binding site for L-lysine. In terms of domain architecture, ATP-grasp spans 85-269; it reads EEFSCPVLFD…LIELLFRAFG (185 aa). ADP-binding positions include K104, K131, S138, and 160–163; that span reads EEYV. D-ornithine contacts are provided by residues 169-171 and D225; that span reads SLE. The Mg(2+) site is built by E227, E239, and D241. Position 239 (E239) interacts with ADP. D-ornithine-binding positions include 243-248 and E302; that span reads RFPSQT. 2 residues coordinate L-lysine: S246 and E302.

The protein belongs to the PylC family. Mg(2+) serves as cofactor.

It catalyses the reaction (3R)-3-methyl-D-ornithine + L-lysine + ATP = (3R)-3-methyl-D-ornithyl-N(6)-L-lysine + ADP + phosphate + H(+). Its pathway is amino-acid biosynthesis; L-pyrrolysine biosynthesis. Its function is as follows. Is required for the biosynthesis of pyrrolysine. Catalyzes the ATP-dependent ligation between (3R)-3-methyl-D-ornithine and L-lysine, leading to (3R)-3-methyl-D-ornithyl-N6-L-lysine. This Methanosarcina acetivorans (strain ATCC 35395 / DSM 2834 / JCM 12185 / C2A) protein is 3-methyl-D-ornithine--L-lysine ligase.